The sequence spans 243 residues: Uridylate kinase (243 aa).

12–15 (KLSG) contributes to the ATP binding site. Residue glycine 54 coordinates UMP. Positions 55 and 59 each coordinate ATP. 135–142 (TGNPYFTT) is a binding site for UMP. 3 residues coordinate ATP: asparagine 163, tyrosine 169, and aspartate 172.

Belongs to the UMP kinase family. As to quaternary structure, homohexamer.

It localises to the cytoplasm. It carries out the reaction UMP + ATP = UDP + ADP. It participates in pyrimidine metabolism; CTP biosynthesis via de novo pathway; UDP from UMP (UMPK route): step 1/1. With respect to regulation, inhibited by UTP. Its function is as follows. Catalyzes the reversible phosphorylation of UMP to UDP. The sequence is that of Uridylate kinase from Roseiflexus sp. (strain RS-1).